Reading from the N-terminus, the 251-residue chain is Triosephosphate isomerase (251 aa).

A substrate-binding site is contributed by 9–11; the sequence is NWK. The active-site Electrophile is His-95. Residue Glu-167 is the Proton acceptor of the active site. Substrate-binding positions include Gly-173, Ser-213, and 234 to 235; that span reads GG. A Phosphoserine modification is found at Ser-213.

This sequence belongs to the triosephosphate isomerase family. Homodimer.

It is found in the cytoplasm. It catalyses the reaction D-glyceraldehyde 3-phosphate = dihydroxyacetone phosphate. The protein operates within carbohydrate biosynthesis; gluconeogenesis. It functions in the pathway carbohydrate degradation; glycolysis; D-glyceraldehyde 3-phosphate from glycerone phosphate: step 1/1. In terms of biological role, involved in the gluconeogenesis. Catalyzes stereospecifically the conversion of dihydroxyacetone phosphate (DHAP) to D-glyceraldehyde-3-phosphate (G3P). This chain is Triosephosphate isomerase, found in Priestia megaterium (strain DSM 319 / IMG 1521) (Bacillus megaterium).